Here is a 363-residue protein sequence, read N- to C-terminus: MTSEQTLLVLGIETTCDETAAAVVERRADGSGRILSNIVRSQTDEHAPFGGVVPEIAARAHVDLLDGIVARAMREAGTGFPELSGVAAAAGPGLIGGVIVGLTTAKAIALVHNTPLIAVNHLEAHALTPRLTDATEFPYCLFLASGGHTQIVAVRGVGDYVRLGTTVDDAIGEAFDKIAKMLGLPYPGGPQVERAAASGDAVRFAFPRPMLGRPDANFSLSGLKTAVRNEASRLTPLEPQDINDLCAGFQAAVLDSMADRLTSGLRLFRERFGAPKALVAAGGVAANQAIRRALREVAAKAQTTLIVPPPALCTDNGAMIAWAGAERLALGLTDSMDAAPRARWLLDANATAPGKFANTRAGF.

The Fe cation site is built by His121 and His125. Substrate is bound by residues 143-147 (LASGG), Asp176, Gly189, and Asn287. Fe cation is bound at residue Asp315.

This sequence belongs to the KAE1 / TsaD family. Fe(2+) serves as cofactor.

It localises to the cytoplasm. The catalysed reaction is L-threonylcarbamoyladenylate + adenosine(37) in tRNA = N(6)-L-threonylcarbamoyladenosine(37) in tRNA + AMP + H(+). Functionally, required for the formation of a threonylcarbamoyl group on adenosine at position 37 (t(6)A37) in tRNAs that read codons beginning with adenine. Is involved in the transfer of the threonylcarbamoyl moiety of threonylcarbamoyl-AMP (TC-AMP) to the N6 group of A37, together with TsaE and TsaB. TsaD likely plays a direct catalytic role in this reaction. This chain is tRNA N6-adenosine threonylcarbamoyltransferase, found in Rhodopseudomonas palustris (strain HaA2).